The primary structure comprises 219 residues: ATP synthase F(0) complex subunit a (219 aa).

Transmembrane regions (helical) follow at residues 4–24 (PTYLGIPLIAVALTLPWILFP), 61–81 (WAALLTSLMLFLITLNMLGLL), 90–110 (QLSLNMGLAVPLWLATVIIGM), 124–144 (EGTPVPLIPVLIIIETISLFI), 172–192 (FVLLPLMPTVAILTSIVLFLL), and 194–214 (LLEIAVAMIQAYVFVLLLSLY).

Belongs to the ATPase A chain family. As to quaternary structure, component of the ATP synthase complex composed at least of ATP5F1A/subunit alpha, ATP5F1B/subunit beta, ATP5MC1/subunit c (homooctomer), MT-ATP6/subunit a, MT-ATP8/subunit 8, ATP5ME/subunit e, ATP5MF/subunit f, ATP5MG/subunit g, ATP5MK/subunit k, ATP5MJ/subunit j, ATP5F1C/subunit gamma, ATP5F1D/subunit delta, ATP5F1E/subunit epsilon, ATP5PF/subunit F6, ATP5PB/subunit b, ATP5PD/subunit d, ATP5PO/subunit OSCP. ATP synthase complex consists of a soluble F(1) head domain (subunits alpha(3) and beta(3)) - the catalytic core - and a membrane F(0) domain - the membrane proton channel (subunits c, a, 8, e, f, g, k and j). These two domains are linked by a central stalk (subunits gamma, delta, and epsilon) rotating inside the F1 region and a stationary peripheral stalk (subunits F6, b, d, and OSCP). Interacts with DNAJC30; interaction is direct.

The protein localises to the mitochondrion inner membrane. It carries out the reaction H(+)(in) = H(+)(out). Subunit a, of the mitochondrial membrane ATP synthase complex (F(1)F(0) ATP synthase or Complex V) that produces ATP from ADP in the presence of a proton gradient across the membrane which is generated by electron transport complexes of the respiratory chain. ATP synthase complex consist of a soluble F(1) head domain - the catalytic core - and a membrane F(1) domain - the membrane proton channel. These two domains are linked by a central stalk rotating inside the F(1) region and a stationary peripheral stalk. During catalysis, ATP synthesis in the catalytic domain of F(1) is coupled via a rotary mechanism of the central stalk subunits to proton translocation. With the subunit c (ATP5MC1), forms the proton-conducting channel in the F(0) domain, that contains two crucial half-channels (inlet and outlet) that facilitate proton movement from the mitochondrial intermembrane space (IMS) into the matrix. Protons are taken up via the inlet half-channel and released through the outlet half-channel, following a Grotthuss mechanism. This Oncorhynchus masou (Cherry salmon) protein is ATP synthase F(0) complex subunit a.